Here is a 222-residue protein sequence, read N- to C-terminus: Mediator of RNA polymerase II transcription subunit 7 (222 aa).

Residues 34-55 are disordered; that stretch reads YKEKKAASAKQTAPNNSNGGSE. The segment covering 42-53 has biased composition (polar residues); sequence AKQTAPNNSNGG.

It belongs to the Mediator complex subunit 7 family. In terms of assembly, component of the Mediator complex, which is composed of at least 21 subunits that form three structurally distinct submodules. The Mediator head module contains MED6, MED8, MED11, SRB4/MED17, SRB5/MED18, ROX3/MED19, SRB2/MED20 and SRB6/MED22, the middle module contains MED1, MED4, NUT1/MED5, MED7, CSE2/MED9, NUT2/MED10, SRB7/MED21 and SOH1/MED31, and the tail module contains MED2, PGD1/MED3, RGR1/MED14, GAL11/MED15 and SIN4/MED16. The head and the middle modules interact directly with RNA polymerase II, whereas the elongated tail module interacts with gene-specific regulatory proteins. MED7 interacts directly with MED1, MED4 and SRB7/MED21.

Its subcellular location is the nucleus. Its function is as follows. Component of the Mediator complex, a coactivator involved in the regulated transcription of nearly all RNA polymerase II-dependent genes. Mediator functions as a bridge to convey information from gene-specific regulatory proteins to the basal RNA polymerase II transcription machinery. The Mediator complex, having a compact conformation in its free form, is recruited to promoters by direct interactions with regulatory proteins and serves for the assembly of a functional preinitiation complex with RNA polymerase II and the general transcription factors. The Mediator complex unfolds to an extended conformation and partially surrounds RNA polymerase II, specifically interacting with the unphosphorylated form of the C-terminal domain (CTD) of RNA polymerase II. The Mediator complex dissociates from the RNA polymerase II holoenzyme and stays at the promoter when transcriptional elongation begins. This Saccharomyces cerevisiae (strain ATCC 204508 / S288c) (Baker's yeast) protein is Mediator of RNA polymerase II transcription subunit 7 (MED7).